The primary structure comprises 644 residues: Probable potassium transport system protein Kup (644 aa).

12 helical membrane passes run Gly-10–Gly-30, Ile-56–Ile-76, Trp-106–Thr-126, Pro-143–Val-163, Phe-175–Val-195, Phe-212–Thr-232, Ala-252–Leu-272, Pro-282–Ala-302, Ile-343–Phe-363, Phe-371–Val-391, Ala-403–Leu-423, and Phe-425–Thr-445.

The protein belongs to the HAK/KUP transporter (TC 2.A.72) family.

The protein resides in the cell inner membrane. The catalysed reaction is K(+)(in) + H(+)(in) = K(+)(out) + H(+)(out). Transport of potassium into the cell. Likely operates as a K(+):H(+) symporter. This chain is Probable potassium transport system protein Kup, found in Acidithiobacillus ferrooxidans (strain ATCC 23270 / DSM 14882 / CIP 104768 / NCIMB 8455) (Ferrobacillus ferrooxidans (strain ATCC 23270)).